A 540-amino-acid polypeptide reads, in one-letter code: 2-isopropylmalate synthase (540 aa).

The region spanning 8 to 273 (VLIFDTTLRD…FFGRDQDSPT (266 aa)) is the Pyruvate carboxyltransferase domain. The Mn(2+) site is built by aspartate 17, histidine 208, histidine 210, and asparagine 244. The segment at 408 to 540 (QLQLVQVSCG…AVVLDARPTL (133 aa)) is regulatory domain.

Belongs to the alpha-IPM synthase/homocitrate synthase family. LeuA type 1 subfamily. In terms of assembly, homodimer. Requires Mn(2+) as cofactor.

It localises to the cytoplasm. The catalysed reaction is 3-methyl-2-oxobutanoate + acetyl-CoA + H2O = (2S)-2-isopropylmalate + CoA + H(+). It functions in the pathway amino-acid biosynthesis; L-leucine biosynthesis; L-leucine from 3-methyl-2-oxobutanoate: step 1/4. In terms of biological role, catalyzes the condensation of the acetyl group of acetyl-CoA with 3-methyl-2-oxobutanoate (2-ketoisovalerate) to form 3-carboxy-3-hydroxy-4-methylpentanoate (2-isopropylmalate). This Parasynechococcus marenigrum (strain WH8102) protein is 2-isopropylmalate synthase.